A 676-amino-acid polypeptide reads, in one-letter code: Maternal embryonic leucine zipper kinase (676 aa).

In terms of domain architecture, Protein kinase spans 13-265 (YEVYETIGSG…VKHLLDHPWV (253 aa)). ATP is bound by residues 19–27 (IGSGGFAKV) and Lys42. The active-site Proton acceptor is the Asp134. Residue Thr169 is modified to Phosphothreonine; by autocatalysis. A Phosphoserine; by autocatalysis modification is found at Ser173. Residues 284–323 (IDEDCITEMAVTFKQSKQRTIQLVSEWKYDQITATYLLLL) form a UBA-like region. Residues 328-673 (QGRPVRLRAE…VEDILSSSSQ (346 aa)) are autoinhibitory region. The segment covering 423–443 (EHSRPCRQKPERRERTKENKE) has biased composition (basic and acidic residues). Positions 423 to 518 (EHSRPCRQKP…QQNGQQGELN (96 aa)) are disordered. Residues 462-489 (TPTSSRKVKSNRTVMTTPNHNNNKSSEV) show a composition bias toward polar residues. Over residues 508–518 (QQQNGQQGELN) the composition is skewed to low complexity. The 50-residue stretch at 624–673 (SDFGKVTMQFELEVCLLQKPEVVGIRRQRLKGDAWVYKHLVEDILSSSSQ) folds into the KA1 domain.

Belongs to the protein kinase superfamily. CAMK Ser/Thr protein kinase family. SNF1 subfamily. In terms of processing, autophosphorylated: autophosphorylation of the T-loop at Thr-169 and Ser-173 is required for activation. As to expression, strongly expressed in the eye, gill, kidney, spleen, muscle, ovary and testis and weakly in the heart, liver, and gut. Expressed in the brain and lateral mesoderm at 12 hours post-fertilization (hpf).

The protein localises to the cell membrane. The catalysed reaction is L-seryl-[protein] + ATP = O-phospho-L-seryl-[protein] + ADP + H(+). It carries out the reaction L-threonyl-[protein] + ATP = O-phospho-L-threonyl-[protein] + ADP + H(+). Its activity is regulated as follows. Activated by autophosphorylation of the T-loop at Thr-169 and Ser-173: in contrast to other members of the SNF1 subfamily, phosphorylation at Thr-169 is not mediated by STK11/LKB1 but via autophosphorylation instead. Functionally, serine/threonine-protein kinase involved in various processes such as cell cycle regulation, self-renewal of stem cells, apoptosis and splicing regulation. Also plays a role in primitive hematopoiesis, possibly by affecting the expression of genes critical for hematopoiesis. The polypeptide is Maternal embryonic leucine zipper kinase (melk) (Danio rerio (Zebrafish)).